Reading from the N-terminus, the 86-residue chain is Putative defensin-like protein 9 (86 aa).

A signal peptide spans 1–29; that stretch reads MKSSMQLISTLFFLVILVVAPGMKMVVEG. The residue at position 30 (glutamine 30) is a Pyrrolidone carboxylic acid. Disulfide bonds link cysteine 34–cysteine 79, cysteine 45–cysteine 65, cysteine 51–cysteine 73, and cysteine 55–cysteine 75.

Belongs to the DEFL family.

The protein localises to the secreted. The polypeptide is Putative defensin-like protein 9 (LCR76) (Arabidopsis thaliana (Mouse-ear cress)).